The following is a 673-amino-acid chain: RAS guanyl-releasing protein 4 (673 aa).

2 stretches are compositionally biased toward basic residues: residues 1–10 (MNRKDIKRKS) and 20–32 (GRGR…RHKT). Disordered stretches follow at residues 1–34 (MNRK…KTCP) and 164–188 (LGDA…PGLG). An N-terminal Ras-GEF domain is found at 49-175 (GVLSESSCSE…DASSLLSPGG (127 aa)). A compositionally biased stretch (low complexity) spans 164–173 (LGDASSLLSP). The Ras-GEF domain maps to 201 to 432 (ETEELAQHLT…YELSYAREPR (232 aa)). An EF-hand domain is found at 466–501 (HVEQLVESVFKNYDPEGRGSISLEDFERLSGNFPFA). The Phorbol-ester/DAG-type zinc-finger motif lies at 540 to 590 (LHAFQEVTFRKPTFCHSCSGFLWGVTKQGYRCRDCGLCCHRHCRDQVRVEC). The segment at 592-633 (KRPETKGDPGPPGAPVPATSLPPANCGSEESLSYTLSPDPES) is disordered.

It belongs to the RASGRP family. As to expression, expressed by mast cells and their progenitors (at protein level). Expressed by dendritic cells. In terms of tissue distribution, expressed in neutrophils.

Its subcellular location is the cytoplasm. It localises to the cell membrane. In terms of biological role, functions as a cation- and diacylglycerol (DAG)-regulated nucleotide exchange factor activating Ras through the exchange of bound GDP for GTP. In neutrophils, participates in a phospholipase C-activating N-formyl peptide-activated GPCR (G protein-coupled receptor) signaling pathway by promoting Ras-mediated activation of PIK3CG/PI3Kgamma to promote neutrophil functional responses. In CD117(+) dendritic cells and mast cells, participates in an lipopolysaccharide (LPS)-activated signaling pathway that stimulates the production of interferon-gamma and other pro-inflammatory cytokines by natural killer (NK) cells. May function in mast cell differentiation. Does not appear to be required for the development of B-cells, DC-cells, T-cells, or NK-cells. Functionally, binds diacylglycerol (DAG). Its function is as follows. Unable to bind diacylglycerol (DAG). This Mus musculus (Mouse) protein is RAS guanyl-releasing protein 4 (Rasgrp4).